The following is a 21-amino-acid chain: FANTIRLLINKVREWKNKQSS.

Ser-21 carries the post-translational modification Serine amide.

In terms of tissue distribution, expressed by the venom gland.

Its subcellular location is the secreted. In Cupiennius salei (American wandering spider), this protein is Cupiennin-6b.